Here is a 417-residue protein sequence, read N- to C-terminus: Hyaluronidase-3 (417 aa).

A signal peptide spans Met1 to Gly20. 5 disulfides stabilise this stretch: Cys42/Cys331, Cys205/Cys220, Cys356/Cys367, Cys361/Cys395, and Cys397/Cys406. Asn69 carries N-linked (GlcNAc...) asparagine glycosylation. The active-site Proton donor is Glu129. Asn215 carries N-linked (GlcNAc...) asparagine glycosylation. Residues Ala352–Gln407 form the EGF-like domain.

The protein belongs to the glycosyl hydrolase 56 family. In terms of processing, N-glycosylated. Expressed in sperm. Highly expressed in epidermis of the skin, where it is expressed intracellularily in the deep horny layer (at protein level). Bone marrow, testis and kidney.

It is found in the secreted. The protein resides in the cell membrane. It localises to the cytoplasmic vesicle. The protein localises to the secretory vesicle. Its subcellular location is the acrosome. It is found in the endoplasmic reticulum. The protein resides in the early endosome. The enzyme catalyses Random hydrolysis of (1-&gt;4)-linkages between N-acetyl-beta-D-glucosamine and D-glucuronate residues in hyaluronate.. Functionally, facilitates sperm penetration into the layer of cumulus cells surrounding the egg by digesting hyaluronic acid. Involved in induction of the acrosome reaction in the sperm. Involved in follicular atresia, the breakdown of immature ovarian follicles that are not selected to ovulate. Induces ovarian granulosa cell apoptosis, possibly via apoptotic signaling pathway involving CASP8 and CASP3 activation, and poly(ADP-ribose) polymerase (PARP) cleavage. Has no hyaluronidase activity in embryonic fibroblasts in vitro. Has no hyaluronidase activity in granulosa cells in vitro. The protein is Hyaluronidase-3 (HYAL3) of Homo sapiens (Human).